We begin with the raw amino-acid sequence, 341 residues long: N-acetyl-gamma-glutamyl-phosphate reductase (341 aa).

Cys-146 is a catalytic residue.

It belongs to the NAGSA dehydrogenase family. Type 1 subfamily.

It localises to the cytoplasm. It catalyses the reaction N-acetyl-L-glutamate 5-semialdehyde + phosphate + NADP(+) = N-acetyl-L-glutamyl 5-phosphate + NADPH + H(+). Its pathway is amino-acid biosynthesis; L-arginine biosynthesis; N(2)-acetyl-L-ornithine from L-glutamate: step 3/4. In terms of biological role, catalyzes the NADPH-dependent reduction of N-acetyl-5-glutamyl phosphate to yield N-acetyl-L-glutamate 5-semialdehyde. The sequence is that of N-acetyl-gamma-glutamyl-phosphate reductase from Limosilactobacillus fermentum (strain NBRC 3956 / LMG 18251) (Lactobacillus fermentum).